A 158-amino-acid chain; its full sequence is Developmental pluripotency-associated protein 3 (158 aa).

Disordered stretches follow at residues 1 to 38 (MDEPSEKVDPVVNPETQMYDGSQREDEGDSPDDSEILQ) and 54 to 78 (SAKPTKYHRRQRVRLQVKSQPVENR). Positions 26–35 (DEGDSPDDSE) are enriched in acidic residues. Residues 58–68 (TKYHRRQRVRL) are compositionally biased toward basic residues.

It localises to the nucleus. It is found in the cytoplasm. In terms of biological role, primordial germ cell (PGCs)-specific protein involved in epigenetic chromatin reprogramming in the zygote following fertilization. In zygotes, DNA demethylation occurs selectively in the paternal pronucleus before the first cell division, while the adjacent maternal pronucleus and certain paternally-imprinted loci are protected from this process. Participates in protection of DNA methylation in the maternal pronucleus by preventing conversion of 5mC to 5hmC: specifically recognizes and binds histone H3 dimethylated at 'Lys-9' (H3K9me2) on maternal genome, and protects maternal genome from TET3-mediated conversion to 5hmC and subsequent DNA demethylation. Does not bind paternal chromatin, which is mainly packed into protamine and does not contain much H3K9me2 mark. Also protects imprinted loci that are marked with H3K9me2 in mature sperm from DNA demethylation in early embryogenesis. May be important for the totipotent/pluripotent states continuing through preimplantation development. Also involved in chromatin condensation in oocytogenesis. This chain is Developmental pluripotency-associated protein 3 (Dppa3), found in Rattus norvegicus (Rat).